The primary structure comprises 473 residues: Hexaprenyl pyrophosphate synthase, mitochondrial (473 aa).

3 residues coordinate isopentenyl diphosphate: Lys-84, Arg-87, and His-186. Mg(2+)-binding residues include Asp-193 and Asp-197. An all-trans-polyprenyl diphosphate is bound at residue Arg-202. Arg-203 is an isopentenyl diphosphate binding site. Residues Lys-323, Thr-324, Gln-361, and Lys-378 each contribute to the an all-trans-polyprenyl diphosphate site.

This sequence belongs to the FPP/GGPP synthase family. It depends on Mg(2+) as a cofactor.

It is found in the mitochondrion inner membrane. The protein operates within cofactor biosynthesis; ubiquinone biosynthesis. Its function is as follows. Assembly of polyisoprenoid side chains. The polyprenyl synthase of coenzyme Q biosynthesis catalyzes the formation from isopentenyl diphosphate of all trans-polyprenyl pyrophosphates generally ranging in length of between 6 and 10 isoprene units depending on the species. This chain is Hexaprenyl pyrophosphate synthase, mitochondrial (COQ1), found in Saccharomyces cerevisiae (strain ATCC 204508 / S288c) (Baker's yeast).